Reading from the N-terminus, the 105-residue chain is Large ribosomal subunit protein bL21 (105 aa).

Belongs to the bacterial ribosomal protein bL21 family. Part of the 50S ribosomal subunit. Contacts protein L20.

Functionally, this protein binds to 23S rRNA in the presence of protein L20. This is Large ribosomal subunit protein bL21 from Rickettsia africae (strain ESF-5).